The chain runs to 2682 residues: 3-methylorcinaldehyde synthase (2682 aa).

Residues 111-272 (LIPLVVIEQL…TEITLYGAFH (162 aa)) are N-terminal acylcarrier protein transacylase domain (SAT). Cysteine 154 acts as the Nucleophile; for transacylase activity in catalysis. Residue histidine 272 is the Proton donor/acceptor; for transacylase activity of the active site. The Ketosynthase family 3 (KS3) domain maps to 401 to 826 (ESDIAVIGMA…GSNASMIVMQ (426 aa)). Residues cysteine 573, histidine 708, and histidine 749 each act as for beta-ketoacyl synthase activity in the active site. Residues 947–1237 (FGGQVSTHIG…ITAMTSRALD (291 aa)) are malonyl-CoA:ACP transacylase (MAT) domain. The N-terminal hotdog fold stretch occupies residues 1339 to 1468 (LTFVGFQDSS…GKIKFTNARD (130 aa)). The region spanning 1339–1651 (LTFVGFQDSS…YVKIPKLSMQ (313 aa)) is the PKS/mFAS DH domain. The interval 1367–1649 (LLLGHMTIQT…IAYVKIPKLS (283 aa)) is product template (PT) domain. The active-site Proton acceptor; for dehydratase activity is histidine 1371. Residues 1496-1651 (VDEVLANRSI…YVKIPKLSMQ (156 aa)) form a C-terminal hotdog fold region. Aspartate 1555 acts as the Proton donor; for dehydratase activity in catalysis. The Carrier domain occupies 1723 to 1797 (ENITERVKAV…DLMKVVTGVV (75 aa)). At serine 1757 the chain carries O-(pantetheine 4'-phosphoryl)serine. A methyltransferase domain region spans residues 2021–2211 (EWPLNQVMYT…AGYGHVYWTE (191 aa)). The segment at 2303–2548 (VTGATGGLGA…LGWTPADAIA (246 aa)) is NADPH-binding (R) domain.

The protein operates within secondary metabolite biosynthesis; terpenoid biosynthesis. Its function is as follows. Non-reducing polyketide synthase; part of the gene cluster that mediates the biosynthesis of eupenifeldin, a bistropolone meroterpenoid that acts as an antitumor agent. The first step of eupenifeldin biosynthesis is the biosynthesis of 3-methylorcinaldehyde performed by the non-reducing polyketide synthase eupA. Oxidative dearomatization of 3-methylorcinaldehyde likely catalyzed by the FAD-dependent monooxygenase eupB is followed by oxidative ring expansion by the 2-oxoglutarate-dependent dioxygenase eupC to provide the first tropolone metabolite, tropolone stipitaldehyde. In parallel, generation of sesquiterpene alpha-humulene from farnesylpyrophosphate (FPP) is catalyzed by the terpene cyclase eupE. The cytochrome P450 monooxygenase eupD then hydroxylates humulene to humulenol. The putative Diels-Alderase eupF probably catalyzes the formation of the tropolone-humulene skeleton by linking humulenol and the polyketide moiety. The short-chain dehydrogenase/reductase eupG and the flavin-dependent monooxygenase eupH are also essential for eupenifeldin biosynthesis and are likely the additional decorating enzymes of the tropolone-humulene skeleton to produce final eupenifeldin or derivatives. This chain is 3-methylorcinaldehyde synthase, found in Phoma sp.